The following is a 717-amino-acid chain: Probable E3 ubiquitin-protein ligase WAVH2 (717 aa).

Composition is skewed to polar residues over residues 13–28 (VSSN…SLHT) and 85–94 (RTTSNATPRT). The tract at residues 13-120 (VSSNQDKPQQ…SSSSSSSQGG (108 aa)) is disordered. Residues 95-117 (SNSSSPKFFSNPSSPKSSSSSSS) show a composition bias toward low complexity. The segment at 140–184 (CAICLQRVNSNQSNSTAAIFTAECSHSFHLSCVNGLEDKRCPFCS) adopts an RING-type; atypical zinc-finger fold. Residues 326 to 456 (DLVTVLDLSN…LNATRIPFVV (131 aa)) enclose the VWFA domain.

As to expression, expressed in root tips, cotyledons, leaf primordia and hypocotyls.

The enzyme catalyses S-ubiquitinyl-[E2 ubiquitin-conjugating enzyme]-L-cysteine + [acceptor protein]-L-lysine = [E2 ubiquitin-conjugating enzyme]-L-cysteine + N(6)-ubiquitinyl-[acceptor protein]-L-lysine.. Functionally, probable E3 ubiquitin-protein ligase involved in the regulation of root growth. Acts as a positive regulator of root gravitropism. This Arabidopsis thaliana (Mouse-ear cress) protein is Probable E3 ubiquitin-protein ligase WAVH2.